A 534-amino-acid polypeptide reads, in one-letter code: Glucose-6-phosphate isomerase (534 aa).

Glu-356 (proton donor) is an active-site residue. Catalysis depends on residues His-387 and Lys-502.

It belongs to the GPI family.

It is found in the cytoplasm. It catalyses the reaction alpha-D-glucose 6-phosphate = beta-D-fructose 6-phosphate. It functions in the pathway carbohydrate biosynthesis; gluconeogenesis. It participates in carbohydrate degradation; glycolysis; D-glyceraldehyde 3-phosphate and glycerone phosphate from D-glucose: step 2/4. In terms of biological role, catalyzes the reversible isomerization of glucose-6-phosphate to fructose-6-phosphate. This chain is Glucose-6-phosphate isomerase, found in Desulfotalea psychrophila (strain LSv54 / DSM 12343).